The sequence spans 831 residues: Cation/H(+) symporter 13 (831 aa).

The next 12 membrane-spanning stretches (helical) occupy residues Y50 to F70, V89 to A109, K112 to L132, I147 to F167, L214 to N234, M250 to T270, V282 to M302, G303 to L323, F334 to F354, V364 to A384, L397 to W417, and L430 to Y450.

The protein belongs to the monovalent cation:proton antiporter 2 (CPA2) transporter (TC 2.A.37) family. CHX (TC 2.A.37.4) subfamily. As to expression, preferentially expressed in pollen before and after germination. Detected in pollen grains within anthers of the flower buds or in pollen on fully open flowers and on the stigma, and in pollen tubes growing in the style. Weakly expressed in roots.

The protein resides in the cell membrane. High-affinity potassium transporter that plays a role in K(+) acquisition. May operate as a K(+)/H(+) symporter. The chain is Cation/H(+) symporter 13 (CHX13) from Arabidopsis thaliana (Mouse-ear cress).